A 247-amino-acid chain; its full sequence is Isoprenyl transferase (247 aa).

Asp18 is a catalytic residue. Position 18 (Asp18) interacts with Mg(2+). Residues Gly19–Arg22, Trp23, Arg31, His35, and Ser63–Glu65 contribute to the substrate site. The active-site Proton acceptor is the Asn66. Residues Trp67, Arg69, Arg186, and Arg192–Ser194 each bind substrate. Glu205 contributes to the Mg(2+) binding site.

Belongs to the UPP synthase family. Homodimer. Requires Mg(2+) as cofactor.

In terms of biological role, catalyzes the condensation of isopentenyl diphosphate (IPP) with allylic pyrophosphates generating different type of terpenoids. The sequence is that of Isoprenyl transferase from Agrobacterium fabrum (strain C58 / ATCC 33970) (Agrobacterium tumefaciens (strain C58)).